The following is a 325-amino-acid chain: Myo-inositol dehydrogenase Hyg17 (325 aa).

It belongs to the Gfo/Idh/MocA family.

The catalysed reaction is myo-inositol + NAD(+) = myo-inosose-5 + NADH + H(+). Its pathway is antibiotic biosynthesis. In terms of biological role, dehydrogenase involved in the biosynthesis of the aminocyclitol moiety of hygromycin A, a broad-spectrum antibiotic. Catalyzes the NAD(+)-dependent oxidation of myo-inositol to myo-inosose-5 (neo-inosose). Shows reduced activity with scyllo-inositol, minimal activity with L-chiro-inositol and no activity with D-glucose, D-chiro-inositol, epi-inositol, muco-inositol and allo-inositol. Is specific for NAD(+) and cannot use NADP(+). The protein is Myo-inositol dehydrogenase Hyg17 of Streptomyces leeuwenhoekii.